A 646-amino-acid polypeptide reads, in one-letter code: Preterminal protein (646 aa).

The short motif at 357-366 (RLPVRRRRRR) is the Nuclear localization signal element. Ser555 is subject to O-(5'-phospho-DNA)-serine. The disordered stretch occupies residues 619 to 646 (LHADVPLPPLQANPHPPLPPDARPQRTM). The segment covering 624-640 (PLPPLQANPHPPLPPDA) has biased composition (pro residues).

It belongs to the adenoviridae terminal protein family. Heterodimer with the polymerase; this heterodimer binds to bp 9 to 18 of the genome. Interacts with host POU2F1; POU2F1 binds to the auxiliary sequences in the inverted terminal repeats and tethers the pTP-POL heterodimer to the origin DNA thereby participating in the assembly of the pre-initiation complex (POL-TP-DBP-NFIA-POU2F1). In terms of processing, preterminal protein is used to replicate viral genome, upon genomic encapsidation it is processed first into iTP and finally into TP by adenovirus protease.

It is found in the host nucleus matrix. Functionally, protein covalently bound to the viral DNA that acts as a primer for viral genomic replication by DNA strand displacement. Assembles on the viral origin of replication in an initiation complex with viral polymerase, DBP, host NFIA and host POU2F1/OCT1. During initiation, the polymerase covalently couples the first dCTP with Ser-580 of pTP. The terminal protein stimulates the template activity over 20 fold compared to protein-free templates. Neo-synthesized viral genomes are linked to two preterminal proteins, one for each 5' end. These new genomes are encapsidated in the nucleus, and during capsid maturation by viral protease, preterminal protein is first cleaved into intermediary (iTP), then into mature TP. May play a role in host nuclear matrix localization of genomic DNA. This is Preterminal protein from Homo sapiens (Human).